An 806-amino-acid polypeptide reads, in one-letter code: MSGWPRIYYKLLNLPLSILVKSKSIPAEPAQELGLDTSRPIMYVLPYNSKADLLTLRAQCLAHDLPDPLEPLEIDGALLPRYVFIHGGPRVFTYYTPKEESVKLFHDYLDLHRSNPALDVQMVPVSVMFGRAPGREKGEDNPPLRMLNGVQKFFAISWLGRDSFVRFSPSVSLRRMADEHGTDKIIAQKLARVARMHFARQRLAAVGPRLPARQDLFNKLLASKAIARAVEDEARSKKISHEKAQQNAIALMEEIAANFSYEMIRLTDRILGFTWNRLYQGINVHNAERVRQLAHDGHEIVYVPCHRSHMDYLLLSYVLYHQGLVPPHIAAGINLNFWPAGPIFRRLGAFFIRRTFKGNKLYSTVFREYLGELFSRGYSVEYFVEGGRSRTGRLLDPKTGTLSMTIQAMLRGGTRPITLVPIYIGYEHVMEVGTYAKELRGATKEKESLPQMLKGLSKLRNLGQGYVNFGEPMPLMTYLNQHVPEWRESIDPIEAIRPAWLTPTVNSIAADLMVRINNAGAANAMNLCCTALLASRQRSLTREQLTEQLDCYLDLMRNVPYSTDSTVPAASAGELIAHALQMNKFEVEKDTIGDIIILPREQAVLMTYYRNNIAHMLIMPSLMAAIITQHRRISRDALQQHVEALYPMLKAELFLRWEREELASVIDALASEMQRQGLITLQDDELHINPTHSRTLQLLAAGARETLQRYAITFWLLSANPSINRSTLEKESRTVAQRLSVLHGINAPEFFDKAVFSSLVLTLRDEGYISDTGDAEPAETMKIYQMLADLITSDVRLTIESATQGE.

The HXXXXD motif motif lies at 305–310; sequence CHRSHM.

It belongs to the GPAT/DAPAT family.

It localises to the cell inner membrane. The catalysed reaction is sn-glycerol 3-phosphate + an acyl-CoA = a 1-acyl-sn-glycero-3-phosphate + CoA. Its pathway is phospholipid metabolism; CDP-diacylglycerol biosynthesis; CDP-diacylglycerol from sn-glycerol 3-phosphate: step 1/3. The protein is Glycerol-3-phosphate acyltransferase of Salmonella agona (strain SL483).